The following is a 216-amino-acid chain: Protein Syd (216 aa).

It belongs to the Syd family.

Its subcellular location is the cell inner membrane. Its function is as follows. Interacts with the SecY protein in vivo. May bind preferentially to an uncomplexed state of SecY, thus functioning either as a chelating agent for excess SecY in the cell or as a regulatory factor that negatively controls the translocase function. This is Protein Syd from Shewanella baltica (strain OS195).